The following is a 105-amino-acid chain: Multidrug resistance protein EbrA (105 aa).

4 consecutive transmembrane segments (helical) span residues 2 to 22 (LIGY…AAML), 35 to 55 (ALVV…LNHI), 57 to 77 (LSLS…VIGV), and 84 to 104 (LNAK…LLNW).

Belongs to the drug/metabolite transporter (DMT) superfamily. Small multidrug resistance (SMR) (TC 2.A.7.1) family. EbrA/EbrB subfamily. As to quaternary structure, the efflux pump is composed of EbrA and EbrB.

Its subcellular location is the cell membrane. Its function is as follows. Part of a multidrug efflux pump. Confers resistance to cationic lipophilic dyes such as ethidium bromide, acriflavine, pyronine Y and safranin O. The efflux is probably coupled to an influx of protons. In Bacillus subtilis (strain 168), this protein is Multidrug resistance protein EbrA (ebrA).